The sequence spans 105 residues: ATP-dependent Clp protease adapter protein ClpS (105 aa).

Belongs to the ClpS family. Binds to the N-terminal domain of the chaperone ClpA.

Functionally, involved in the modulation of the specificity of the ClpAP-mediated ATP-dependent protein degradation. The sequence is that of ATP-dependent Clp protease adapter protein ClpS from Aeromonas hydrophila subsp. hydrophila (strain ATCC 7966 / DSM 30187 / BCRC 13018 / CCUG 14551 / JCM 1027 / KCTC 2358 / NCIMB 9240 / NCTC 8049).